A 186-amino-acid polypeptide reads, in one-letter code: Probable RNA 2'-phosphotransferase (186 aa).

It belongs to the KptA/TPT1 family.

Its function is as follows. Removes the 2'-phosphate from RNA via an intermediate in which the phosphate is ADP-ribosylated by NAD followed by a presumed transesterification to release the RNA and generate ADP-ribose 1''-2''-cyclic phosphate (APPR&gt;P). May function as an ADP-ribosylase. The chain is Probable RNA 2'-phosphotransferase from Clostridium perfringens (strain SM101 / Type A).